The primary structure comprises 647 residues: Spindle pole body-associated protein VIK1 (647 aa).

Positions 36–51 are enriched in polar residues; the sequence is NTTNTMNGSRPSSMKS. The interval 36 to 55 is disordered; the sequence is NTTNTMNGSRPSSMKSSLAL. Residues 202-350 adopt a coiled-coil conformation; the sequence is DHEITEEISQ…SKQEKFYNDT (149 aa).

Interacts with KAR3; the interaction is direct.

The protein resides in the cytoplasm. It is found in the cytoskeleton. The protein localises to the microtubule organizing center. It localises to the spindle pole body. Its subcellular location is the nucleus. In terms of biological role, together with the minus end-directed microtubule motor KAR3, plays a role in microtubule organization. Recruits KAR3 to microtubules, and together they may stabilize the polymers. The KAR3-VIK1 heterodimer cross-links anti-parallel microtubules. Targets and/or maintains KAR3 at the spindle pole body during vegetative growth. The protein is Spindle pole body-associated protein VIK1 (VIK1) of Saccharomyces cerevisiae (strain ATCC 204508 / S288c) (Baker's yeast).